The following is a 127-amino-acid chain: uncharacterized protein (127 aa).

Residues 84–103 (IALLSLFISLSIRITCFPFF) form a helical membrane-spanning segment.

It is found in the membrane. This is an uncharacterized protein from Saccharomyces cerevisiae (strain ATCC 204508 / S288c) (Baker's yeast).